A 558-amino-acid polypeptide reads, in one-letter code: 2-isopropylmalate synthase (558 aa).

The 274-residue stretch at 30–303 folds into the Pyruvate carboxyltransferase domain; that stretch reads PIWCSVDLRD…DPKLDCSDIE (274 aa). 4 residues coordinate Mg(2+): D39, H242, H244, and N278. Positions 437-558 are regulatory domain; sequence QPGARIKFVD…ANRVLDVVGK (122 aa).

This sequence belongs to the alpha-IPM synthase/homocitrate synthase family. LeuA type 2 subfamily. As to quaternary structure, homodimer. It depends on Mg(2+) as a cofactor.

Its subcellular location is the cytoplasm. The catalysed reaction is 3-methyl-2-oxobutanoate + acetyl-CoA + H2O = (2S)-2-isopropylmalate + CoA + H(+). The protein operates within amino-acid biosynthesis; L-leucine biosynthesis; L-leucine from 3-methyl-2-oxobutanoate: step 1/4. In terms of biological role, catalyzes the condensation of the acetyl group of acetyl-CoA with 3-methyl-2-oxobutanoate (2-ketoisovalerate) to form 3-carboxy-3-hydroxy-4-methylpentanoate (2-isopropylmalate). This is 2-isopropylmalate synthase from Rhizobium meliloti (strain 1021) (Ensifer meliloti).